The sequence spans 253 residues: 5'/3'-nucleotidase SurE (253 aa).

A divalent metal cation is bound by residues D8, D9, S39, and N92.

The protein belongs to the SurE nucleotidase family. A divalent metal cation is required as a cofactor.

The protein resides in the cytoplasm. The catalysed reaction is a ribonucleoside 5'-phosphate + H2O = a ribonucleoside + phosphate. It carries out the reaction a ribonucleoside 3'-phosphate + H2O = a ribonucleoside + phosphate. The enzyme catalyses [phosphate](n) + H2O = [phosphate](n-1) + phosphate + H(+). In terms of biological role, nucleotidase with a broad substrate specificity as it can dephosphorylate various ribo- and deoxyribonucleoside 5'-monophosphates and ribonucleoside 3'-monophosphates with highest affinity to 3'-AMP. Also hydrolyzes polyphosphate (exopolyphosphatase activity) with the preference for short-chain-length substrates (P20-25). Might be involved in the regulation of dNTP and NTP pools, and in the turnover of 3'-mononucleotides produced by numerous intracellular RNases (T1, T2, and F) during the degradation of various RNAs. The chain is 5'/3'-nucleotidase SurE from Salmonella typhimurium (strain LT2 / SGSC1412 / ATCC 700720).